The primary structure comprises 179 residues: Large ribosomal subunit protein uL6 (179 aa).

Belongs to the universal ribosomal protein uL6 family. As to quaternary structure, part of the 50S ribosomal subunit.

Functionally, this protein binds to the 23S rRNA, and is important in its secondary structure. It is located near the subunit interface in the base of the L7/L12 stalk, and near the tRNA binding site of the peptidyltransferase center. In Legionella pneumophila (strain Paris), this protein is Large ribosomal subunit protein uL6.